The primary structure comprises 632 residues: tRNA uridine 5-carboxymethylaminomethyl modification enzyme MnmG (632 aa).

13–18 contacts FAD; sequence GGGHAG. 274–288 provides a ligand contact to NAD(+); the sequence is GPRYCPSIEDKVMRF.

The protein belongs to the MnmG family. In terms of assembly, homodimer. Heterotetramer of two MnmE and two MnmG subunits. FAD is required as a cofactor.

The protein localises to the cytoplasm. In terms of biological role, NAD-binding protein involved in the addition of a carboxymethylaminomethyl (cmnm) group at the wobble position (U34) of certain tRNAs, forming tRNA-cmnm(5)s(2)U34. The protein is tRNA uridine 5-carboxymethylaminomethyl modification enzyme MnmG of Dichelobacter nodosus (strain VCS1703A).